The chain runs to 38 residues: Large ribosomal subunit protein bL36c (38 aa).

Belongs to the bacterial ribosomal protein bL36 family.

It localises to the plastid. It is found in the chloroplast. The protein is Large ribosomal subunit protein bL36c (rpl36) of Mesostigma viride (Green alga).